We begin with the raw amino-acid sequence, 253 residues long: Proteasome subunit alpha (253 aa).

A disordered region spans residues 229 to 253 (ADESQSYIDDIEDAADDSDDDDDEE). Residues 237-253 (DDIEDAADDSDDDDDEE) are compositionally biased toward acidic residues.

Belongs to the peptidase T1A family. In terms of assembly, the 20S proteasome core is composed of 14 alpha and 14 beta subunits that assemble into four stacked heptameric rings, resulting in a barrel-shaped structure. The two inner rings, each composed of seven catalytic beta subunits, are sandwiched by two outer rings, each composed of seven alpha subunits. The catalytic chamber with the active sites is on the inside of the barrel. Has a gated structure, the ends of the cylinder being occluded by the N-termini of the alpha-subunits. Is capped at one or both ends by the proteasome regulatory ATPase, PAN.

It is found in the cytoplasm. Its activity is regulated as follows. The formation of the proteasomal ATPase PAN-20S proteasome complex, via the docking of the C-termini of PAN into the intersubunit pockets in the alpha-rings, triggers opening of the gate for substrate entry. Interconversion between the open-gate and close-gate conformations leads to a dynamic regulation of the 20S proteasome proteolysis activity. Component of the proteasome core, a large protease complex with broad specificity involved in protein degradation. The chain is Proteasome subunit alpha from Halobacterium salinarum (strain ATCC 29341 / DSM 671 / R1).